Reading from the N-terminus, the 32-residue chain is Chlorophyll a-b binding protein 2, chloroplastic (32 aa).

Residues Glu-19 and His-22 each contribute to the chlorophyll a site. Chlorophyll b is bound at residue Arg-24.

The protein belongs to the light-harvesting chlorophyll a/b-binding (LHC) protein family. The LHC complex consists of chlorophyll a-b binding proteins. Binds at least 14 chlorophylls (8 Chl-a and 6 Chl-b) and carotenoids such as lutein and neoxanthin. serves as cofactor. In terms of processing, photoregulated by reversible phosphorylation of its threonine residues.

The protein localises to the plastid. It is found in the chloroplast thylakoid membrane. The light-harvesting complex (LHC) functions as a light receptor, it captures and delivers excitation energy to photosystems with which it is closely associated. This Populus euphratica (Euphrates poplar) protein is Chlorophyll a-b binding protein 2, chloroplastic.